We begin with the raw amino-acid sequence, 300 residues long: B3 domain-containing protein At5g57720 (300 aa).

The TF-B3 DNA-binding region spans P11–G105. Residues K115–E142 form a disordered region. The span at I119–D129 shows a compositional bias: acidic residues.

Its subcellular location is the nucleus. This is B3 domain-containing protein At5g57720 from Arabidopsis thaliana (Mouse-ear cress).